The primary structure comprises 452 residues: 3-phosphoshikimate 1-carboxyvinyltransferase (452 aa).

Residues Lys24, Ser25, and Arg29 each coordinate 3-phosphoshikimate. Lys24 lines the phosphoenolpyruvate pocket. The phosphoenolpyruvate site is built by Gly95 and Arg123. 3-phosphoshikimate is bound by residues Ser167, Gln169, Asp319, and Lys346. Gln169 is a phosphoenolpyruvate binding site. The Proton acceptor role is filled by Asp319. Residues Arg350 and Arg394 each coordinate phosphoenolpyruvate.

Belongs to the EPSP synthase family. In terms of assembly, monomer.

Its subcellular location is the cytoplasm. The catalysed reaction is 3-phosphoshikimate + phosphoenolpyruvate = 5-O-(1-carboxyvinyl)-3-phosphoshikimate + phosphate. It participates in metabolic intermediate biosynthesis; chorismate biosynthesis; chorismate from D-erythrose 4-phosphate and phosphoenolpyruvate: step 6/7. Functionally, catalyzes the transfer of the enolpyruvyl moiety of phosphoenolpyruvate (PEP) to the 5-hydroxyl of shikimate-3-phosphate (S3P) to produce enolpyruvyl shikimate-3-phosphate and inorganic phosphate. This is 3-phosphoshikimate 1-carboxyvinyltransferase from Phenylobacterium zucineum (strain HLK1).